The chain runs to 1862 residues: Ankyrin-1 (1862 aa).

The interval 1–827 (MGFCKADAAT…DELVGSKAER (827 aa)) is 89 kDa domain. ANK repeat units lie at residues 40–69 (NGLN…ILET), 73–102 (KGNT…NVNA), 106–135 (KGFT…NQNV), 139–168 (DGFT…KGKV), 170–197 (LPAL…NPDV), 201–230 (TGFT…SVNF), 234–263 (NGIT…QIET), 267–296 (DELT…PIQA), 300–329 (NGLS…EIDD), 333–362 (DHLT…KPNS), 366–395 (NGFT…SIDA), 399–428 (SGLT…SPNV), 432–461 (KVET…KANA), 465–494 (DDQT…SPNL), 498–527 (AGHT…SQAC), 531–560 (KGFT…HPNA), 564–593 (NGLT…SPHS), 597–626 (NGYT…SANA), 630–659 (QGVT…NGNL), 663–692 (SGLT…TVDA), 696–725 (MGYT…DVNA), 729–758 (LGYS…SPNE), and 762–791 (NGTT…ETSV). Lys-55 carries the phosphoserine modification. Residue Asn-101 is modified to (3S)-3-hydroxyasparagine; by HIF1AN; partial. Asn-229 carries the post-translational modification (3S)-3-hydroxyasparagine; by HIF1AN. Ser-425 carries the phosphoserine modification. Residues Asn-427 and Asn-460 each carry the (3S)-3-hydroxyasparagine; by HIF1AN modification. A (3S)-3-hydroxyasparagine; by HIF1AN mark is found at Asn-625 and Asn-658. (3S)-3-hydroxyaspartate; by HIF1AN is present on Asp-691. Asn-724 carries the post-translational modification (3S)-3-hydroxyasparagine; by HIF1AN. Ser-755 is subject to Phosphoserine. Asn-757 bears the (3S)-3-hydroxyasparagine; by HIF1AN mark. Phosphoserine occurs at positions 777, 813, 830, and 852. Residues 812–834 (VSEDEGDELVGSKAERRDSRDVG) form a disordered region. The segment covering 824–834 (KAERRDSRDVG) has biased composition (basic and acidic residues). Thr-862 bears the Phosphothreonine mark. Residues 872 to 900 (DQEQASKEYDEDSLIPSSPATETSDNISP) are disordered. Positions 886-900 (IPSSPATETSDNISP) are enriched in polar residues. 2 ZU5 domains span residues 909–1064 (FLVS…IMSR) and 1066–1212 (CQDY…LSDC). Thr-957 carries the post-translational modification Phosphothreonine. The residue at position 1069 (Tyr-1069) is a Phosphotyrosine. Residue Ser-1078 is modified to Phosphoserine. Residues 1197–1331 (ANFTTNVSAR…PVKVRDSSRE (135 aa)) form a UPA domain region. Phosphothreonine occurs at positions 1374 and 1376. A phosphoserine mark is found at Ser-1386 and Ser-1388. The segment at 1387–1862 (ESRLGFTSDT…KRASLKRGKQ (476 aa)) is 55 kDa regulatory domain. Thr-1396 is modified (phosphothreonine). Positions 1399–1483 (VEMRMAVIRE…EIVNMLEGSG (85 aa)) constitute a Death domain. Residues Ser-1424, Ser-1473, and Ser-1482 each carry the phosphoserine modification. The tract at residues 1481–1506 (GSGRQSRNLKPERRHGDREYSLSPSQ) is disordered. The span at 1489–1500 (LKPERRHGDREY) shows a compositional bias: basic and acidic residues. Ser-1519, Ser-1529, and Ser-1612 each carry phosphoserine. Disordered stretches follow at residues 1598–1720 (EGAH…GPHS) and 1744–1767 (VSTR…KEPS). The span at 1637-1647 (EGQRSEKKRQE) shows a compositional bias: basic and acidic residues. The segment covering 1648 to 1666 (VSGTEQDTETEVSLVSGQQ) has biased composition (polar residues). A phosphoserine mark is found at Ser-1660, Ser-1675, and Ser-1685. Positions 1681–1694 (VLDRSQARTLDWDK) are enriched in basic and acidic residues. Polar residues predominate over residues 1695–1720 (QGSTAVHPQEATQSSWQEEVTQGPHS).

As to quaternary structure, component of the ankyrin-1 complex in the erythrocyte, composed of ANK1, RHCE, RHAG, SLC4A1, EPB42, GYPA, GYPB and AQP1. Interacts with a number of integral membrane proteins and cytoskeletal proteins. Interacts (via N-terminus) with SPTB/spectrin (beta chain). Also interacts with TTN/titin. Isoform Mu17 interacts with OBSCN isoform 3/obscurin. Interacts with HIF1AN. Interacts (via ANK 1-5 repeats) with RHCE; this interaction mediates the primary membrane attachment site for ANK1. Interacts (via ANK 1-2 repeats) with AQP1 (via the N-terminal). Interacts (via ANK 1-13 repeats) with EPB42. Interacts directly with SLC4A1 (via the cytoplasmic domain); this interaction is mediated by the SLC4A1 Band 3-II and Band 3-III dimers. Regulated by phosphorylation. In terms of processing, acylated by palmitic acid group(s). Post-translationally, hydroxylated by HIF1AN at several asparagine and 1 aspartate residue within ANK repeat region; hydroxylation seems to increase the conformational stability of this region and may also modulate protein-protein interactions mediated by the ANK repeat region.

It is found in the cytoplasm. It localises to the cytoskeleton. The protein resides in the membrane. Its subcellular location is the sarcoplasmic reticulum. Its function is as follows. Component of the ankyrin-1 complex, a multiprotein complex involved in the stability and shape of the erythrocyte membrane. Attaches integral membrane proteins to cytoskeletal elements; binds to the erythrocyte membrane protein band 4.2, to Na-K ATPase, to the lymphocyte membrane protein GP85, and to the cytoskeletal proteins fodrin, tubulin, vimentin and desmin. Erythrocyte ankyrins also link spectrin (beta chain) to the cytoplasmic domain of the erythrocytes anion exchange protein; they retain most or all of these binding functions. The polypeptide is Ankyrin-1 (Mus musculus (Mouse)).